A 221-amino-acid chain; its full sequence is MSRSLGRLYLVATPRPDQPEAEFLARVEAALDGGVDTLQLRCKAGSPQYGEARPYIALARRVGALAQARDVPFFVNDRVDVALASGADGVHLGQDDLPAEWARRLAPGLQIGLSTHSPEQAARAQAEHPTYFAVGPVYATPTKPGRAAAGLAYVRHVAALCPAVPWYAIGGVDLSTVDDVVAAGATRVAVVRAVLDAPDPARAAADLLARLPDAWEARVCR.

Residues 39-43 and N76 contribute to the 4-amino-2-methyl-5-(diphosphooxymethyl)pyrimidine site; that span reads QLRCK. Residues D77 and D96 each coordinate Mg(2+). Residue S114 coordinates 4-amino-2-methyl-5-(diphosphooxymethyl)pyrimidine. Residue 140–142 coordinates 2-[(2R,5Z)-2-carboxy-4-methylthiazol-5(2H)-ylidene]ethyl phosphate; the sequence is TPT. K143 lines the 4-amino-2-methyl-5-(diphosphooxymethyl)pyrimidine pocket. Position 171 (G171) interacts with 2-[(2R,5Z)-2-carboxy-4-methylthiazol-5(2H)-ylidene]ethyl phosphate.

It belongs to the thiamine-phosphate synthase family. Mg(2+) is required as a cofactor.

It carries out the reaction 2-[(2R,5Z)-2-carboxy-4-methylthiazol-5(2H)-ylidene]ethyl phosphate + 4-amino-2-methyl-5-(diphosphooxymethyl)pyrimidine + 2 H(+) = thiamine phosphate + CO2 + diphosphate. It catalyses the reaction 2-(2-carboxy-4-methylthiazol-5-yl)ethyl phosphate + 4-amino-2-methyl-5-(diphosphooxymethyl)pyrimidine + 2 H(+) = thiamine phosphate + CO2 + diphosphate. The catalysed reaction is 4-methyl-5-(2-phosphooxyethyl)-thiazole + 4-amino-2-methyl-5-(diphosphooxymethyl)pyrimidine + H(+) = thiamine phosphate + diphosphate. The protein operates within cofactor biosynthesis; thiamine diphosphate biosynthesis; thiamine phosphate from 4-amino-2-methyl-5-diphosphomethylpyrimidine and 4-methyl-5-(2-phosphoethyl)-thiazole: step 1/1. In terms of biological role, condenses 4-methyl-5-(beta-hydroxyethyl)thiazole monophosphate (THZ-P) and 2-methyl-4-amino-5-hydroxymethyl pyrimidine pyrophosphate (HMP-PP) to form thiamine monophosphate (TMP). The protein is Thiamine-phosphate synthase of Deinococcus geothermalis (strain DSM 11300 / CIP 105573 / AG-3a).